A 209-amino-acid polypeptide reads, in one-letter code: MIGLVGKKVGMTRIFTEDGVSIPVTVIEVEANRVTQVKDLANDGYRAVQVTTGAKKANRVTKPEAGHFAKAGVEAGRGLWEFRLAEGEEYTVGQSISVELFADVKKVDVTGTSKGKGFAGTVKRWNFRTQDATHGNSLSHRVPGSIGQNQTPGKVFKGKKMAGQLGNERVTVQSLDVVRVDAERNLLLVKGGVPGATGCDLIVKPAVKA.

Gln-150 is subject to N5-methylglutamine.

The protein belongs to the universal ribosomal protein uL3 family. As to quaternary structure, part of the 50S ribosomal subunit. Forms a cluster with proteins L14 and L19. In terms of processing, methylated by PrmB.

One of the primary rRNA binding proteins, it binds directly near the 3'-end of the 23S rRNA, where it nucleates assembly of the 50S subunit. This Citrobacter koseri (strain ATCC BAA-895 / CDC 4225-83 / SGSC4696) protein is Large ribosomal subunit protein uL3.